A 191-amino-acid polypeptide reads, in one-letter code: Glutathione-dependent formaldehyde-activating enzyme (191 aa).

The 148-residue stretch at 22 to 169 folds into the CENP-V/GFA domain; sequence FAGGTLQCLC…LTELGLTPYD (148 aa). Cysteine 29, cysteine 31, cysteine 50, cysteine 52, cysteine 55, cysteine 97, and cysteine 100 together coordinate Zn(2+).

Belongs to the Gfa family. The cofactor is Zn(2+).

The catalysed reaction is S-(hydroxymethyl)glutathione = glutathione + formaldehyde. It participates in one-carbon metabolism; formaldehyde degradation; formate from formaldehyde (glutathione route): step 1/3. Its function is as follows. Catalyzes the condensation of formaldehyde and glutathione to S-hydroxymethylglutathione. This chain is Glutathione-dependent formaldehyde-activating enzyme, found in Xanthomonas campestris pv. campestris (strain B100).